Reading from the N-terminus, the 263-residue chain is Complement C1q tumor necrosis factor-related protein 6 (263 aa).

Residues M1–G24 form the signal peptide. N76 is a glycosylation site (N-linked (GlcNAc...) asparagine). Positions L80–S123 are disordered. The 42-residue stretch at G82–S123 folds into the Collagen-like domain. The region spanning C124–N263 is the C1q domain.

It localises to the secreted. This chain is Complement C1q tumor necrosis factor-related protein 6 (C1qtnf6), found in Rattus norvegicus (Rat).